The primary structure comprises 223 residues: Adenylate kinase (223 aa).

10–15 (GSGKGT) contributes to the ATP binding site. The interval 30 to 59 (ESGAIFRKHIGGGTELGMKAKEYIDKGELV) is NMP. AMP contacts are provided by residues Ser-31, Arg-36, 57–59 (ELV), 84–87 (GFPR), and Gln-91. Positions 125-164 (GRRLCENDPNHPNNKFIDAIKPDGDKCRVCGGALSERADD) are LID. Arg-126 contacts ATP. AMP contacts are provided by Arg-161 and Arg-173. Gly-209 lines the ATP pocket.

Belongs to the adenylate kinase family. Monomer.

Its subcellular location is the cytoplasm. It catalyses the reaction AMP + ATP = 2 ADP. The protein operates within purine metabolism; AMP biosynthesis via salvage pathway; AMP from ADP: step 1/1. In terms of biological role, catalyzes the reversible transfer of the terminal phosphate group between ATP and AMP. Plays an important role in cellular energy homeostasis and in adenine nucleotide metabolism. This is Adenylate kinase from Maridesulfovibrio salexigens (strain ATCC 14822 / DSM 2638 / NCIMB 8403 / VKM B-1763) (Desulfovibrio salexigens).